Reading from the N-terminus, the 178-residue chain is Large ribosomal subunit protein uL6 (178 aa).

The protein belongs to the universal ribosomal protein uL6 family. In terms of assembly, part of the 50S ribosomal subunit.

Its function is as follows. This protein binds to the 23S rRNA, and is important in its secondary structure. It is located near the subunit interface in the base of the L7/L12 stalk, and near the tRNA binding site of the peptidyltransferase center. The polypeptide is Large ribosomal subunit protein uL6 (Bacillus licheniformis (strain ATCC 14580 / DSM 13 / JCM 2505 / CCUG 7422 / NBRC 12200 / NCIMB 9375 / NCTC 10341 / NRRL NRS-1264 / Gibson 46)).